A 221-amino-acid polypeptide reads, in one-letter code: Max dimerization protein 1 (221 aa).

The short motif at 21–49 is the Nuclear localization signal element; the sequence is RREREAEHGYASMLPYNSKERDGLKRKSK. Disordered regions lie at residues 28–67 and 176–202; these read HGYA…EKNR and DWSS…DEGY. The bHLH domain maps to 55–107; sequence NSRSTHNEMEKNRRAHLRLCLEKLKILVPLGPESNRHTTLSLLTRAKSHIKKL. Positions 192-202 are enriched in polar residues; the sequence is SMQSICSDEGY.

In terms of assembly, efficient DNA binding requires dimerization with another bHLH protein. Binds DNA as a heterodimer with MAX.

The protein localises to the nucleus. Functionally, transcriptional repressor. MAD binds with MAX to form a sequence-specific DNA-binding protein complex which recognizes the core sequence 5'-CAC[GA]TG-3'. MAD thus antagonizes MYC transcriptional activity by competing for MAX. In Xenopus tropicalis (Western clawed frog), this protein is Max dimerization protein 1 (mxd1).